Reading from the N-terminus, the 288-residue chain is ATP synthase gamma chain (288 aa).

It belongs to the ATPase gamma chain family. In terms of assembly, F-type ATPases have 2 components, CF(1) - the catalytic core - and CF(0) - the membrane proton channel. CF(1) has five subunits: alpha(3), beta(3), gamma(1), delta(1), epsilon(1). CF(0) has three main subunits: a, b and c.

Its subcellular location is the cell inner membrane. Its function is as follows. Produces ATP from ADP in the presence of a proton gradient across the membrane. The gamma chain is believed to be important in regulating ATPase activity and the flow of protons through the CF(0) complex. The protein is ATP synthase gamma chain of Rickettsia prowazekii (strain Madrid E).